The chain runs to 275 residues: Acetyl-coenzyme A carboxylase carboxyl transferase subunit beta (275 aa).

Positions 18–275 (KDNAGPAVPS…IHRLGGEMHA (258 aa)) constitute a CoA carboxyltransferase N-terminal domain. The segment at 23–47 (PAVPSNTHSSKSNGNPVSEMKENKR) is disordered. The segment covering 26–38 (PSNTHSSKSNGNP) has biased composition (polar residues).

It belongs to the AccD/PCCB family. Acetyl-CoA carboxylase is a heterohexamer composed of biotin carboxyl carrier protein (AccB), biotin carboxylase (AccC) and two subunits each of ACCase subunit alpha (AccA) and ACCase subunit beta (AccD).

The protein resides in the cytoplasm. The catalysed reaction is N(6)-carboxybiotinyl-L-lysyl-[protein] + acetyl-CoA = N(6)-biotinyl-L-lysyl-[protein] + malonyl-CoA. The protein operates within lipid metabolism; malonyl-CoA biosynthesis; malonyl-CoA from acetyl-CoA: step 1/1. Component of the acetyl coenzyme A carboxylase (ACC) complex. Biotin carboxylase (BC) catalyzes the carboxylation of biotin on its carrier protein (BCCP) and then the CO(2) group is transferred by the transcarboxylase to acetyl-CoA to form malonyl-CoA. This Alkaliphilus oremlandii (strain OhILAs) (Clostridium oremlandii (strain OhILAs)) protein is Acetyl-coenzyme A carboxylase carboxyl transferase subunit beta.